The sequence spans 398 residues: MPSSKRTAAIIVAAGRGLRAGAGGPKQYRTIGGRTVISRAMEAFCQHPDVFAVQPVLNPDDLSMFNQAAAQFRYRPPANGGATRQASVRAGLEALAADAPDIVLIHDAARPFVTPALITRAIDAADKAGAAVPAIAVTDTIKQVDESGAVNATPDRAKLRIAQTPQAFHFDMILDAHRRAAREGRDDFTDDAALAEWVGLTVATFEGDAANMKLTTPEDFVREEARLAAALGDIRTGTGYDVHAFGEGDHLMLCGVKVPHNCGFLAHSDGDVGLHALVDAILGALADGDIGSHFPPSDPQWKGAASDKFLKYAVDRVTARGGRVANLEVTMICQQPKIGPLRDQMRARIADITGVAISRIAVKATTSERLGFTGREEGIAATASATIRLPWNDKGRDT.

Positions 1–234 (MPSSKRTAAI…ARLAAALGDI (234 aa)) are 2-C-methyl-D-erythritol 4-phosphate cytidylyltransferase. Residues 235 to 398 (RTGTGYDVHA…LPWNDKGRDT (164 aa)) form a 2-C-methyl-D-erythritol 2,4-cyclodiphosphate synthase region. Aspartate 241 and histidine 243 together coordinate a divalent metal cation. 4-CDP-2-C-methyl-D-erythritol 2-phosphate is bound by residues 241–243 (DVH) and 267–268 (HS). Histidine 275 contributes to the a divalent metal cation binding site. 4-CDP-2-C-methyl-D-erythritol 2-phosphate-binding positions include 289–291 (DIG), 365–368 (TTSE), phenylalanine 372, and arginine 375.

This sequence in the N-terminal section; belongs to the IspD/TarI cytidylyltransferase family. IspD subfamily. In the C-terminal section; belongs to the IspF family. The cofactor is a divalent metal cation.

It carries out the reaction 2-C-methyl-D-erythritol 4-phosphate + CTP + H(+) = 4-CDP-2-C-methyl-D-erythritol + diphosphate. The enzyme catalyses 4-CDP-2-C-methyl-D-erythritol 2-phosphate = 2-C-methyl-D-erythritol 2,4-cyclic diphosphate + CMP. The protein operates within isoprenoid biosynthesis; isopentenyl diphosphate biosynthesis via DXP pathway; isopentenyl diphosphate from 1-deoxy-D-xylulose 5-phosphate: step 2/6. It functions in the pathway isoprenoid biosynthesis; isopentenyl diphosphate biosynthesis via DXP pathway; isopentenyl diphosphate from 1-deoxy-D-xylulose 5-phosphate: step 4/6. Its function is as follows. Bifunctional enzyme that catalyzes the formation of 4-diphosphocytidyl-2-C-methyl-D-erythritol from CTP and 2-C-methyl-D-erythritol 4-phosphate (MEP) (IspD), and catalyzes the conversion of 4-diphosphocytidyl-2-C-methyl-D-erythritol 2-phosphate (CDP-ME2P) to 2-C-methyl-D-erythritol 2,4-cyclodiphosphate (ME-CPP) with a corresponding release of cytidine 5-monophosphate (CMP) (IspF). The protein is Bifunctional enzyme IspD/IspF of Nitrobacter winogradskyi (strain ATCC 25391 / DSM 10237 / CIP 104748 / NCIMB 11846 / Nb-255).